Here is a 333-residue protein sequence, read N- to C-terminus: 5-formaminoimidazole-4-carboxamide-1-(beta)-D-ribofuranosyl 5'-monophosphate synthetase (333 aa).

Positions 10 and 74 each coordinate 5-amino-1-(5-phospho-beta-D-ribosyl)imidazole-4-carboxamide. Residues 95–324 (RNLFAWESNQ…ISREIRLALN (230 aa)) form the ATP-grasp domain. Residues 125 to 185 (VEDV…VPMY) and glutamate 207 each bind ATP. Residue asparagine 230 coordinates 5-amino-1-(5-phospho-beta-D-ribosyl)imidazole-4-carboxamide. Residues glutamate 269 and glutamate 282 each coordinate Mg(2+).

It belongs to the phosphohexose mutase family. Mg(2+) serves as cofactor. The cofactor is Mn(2+).

The enzyme catalyses 5-amino-1-(5-phospho-beta-D-ribosyl)imidazole-4-carboxamide + formate + ATP = 5-formamido-1-(5-phospho-D-ribosyl)imidazole-4-carboxamide + ADP + phosphate. It functions in the pathway purine metabolism; IMP biosynthesis via de novo pathway; 5-formamido-1-(5-phospho-D-ribosyl)imidazole-4-carboxamide from 5-amino-1-(5-phospho-D-ribosyl)imidazole-4-carboxamide (formate route): step 1/1. Catalyzes the ATP- and formate-dependent formylation of 5-aminoimidazole-4-carboxamide-1-beta-d-ribofuranosyl 5'-monophosphate (AICAR) to 5-formaminoimidazole-4-carboxamide-1-beta-d-ribofuranosyl 5'-monophosphate (FAICAR) in the absence of folates. The chain is 5-formaminoimidazole-4-carboxamide-1-(beta)-D-ribofuranosyl 5'-monophosphate synthetase from Sulfolobus acidocaldarius (strain ATCC 33909 / DSM 639 / JCM 8929 / NBRC 15157 / NCIMB 11770).